Here is a 736-residue protein sequence, read N- to C-terminus: Na(+)/H(+) antiporter NhaA (736 aa).

The interval 1-387 (MNHSPQSARP…ICGYLLLRAA (387 aa)) is na(+)/H(+) antiporter NhaA. 11 consecutive transmembrane segments (helical) span residues 23-43 (AGGI…NSPF), 58-78 (LSLA…LVGL), 96-116 (MLPG…FAVL), 126-146 (GWAV…SLLG), 155-175 (VFLA…IAIF), 178-198 (AEIS…LFVM), 201-221 (MDVV…FFVF), 265-285 (VAFI…FKGL), 298-318 (ILLG…WLAI), 334-354 (LYGV…IGLL), and 367-387 (IGVL…LRAA). Residues 388 to 736 (RPDQSAANPL…EKAIWARYGL (349 aa)) are peptidase S49.

The protein in the N-terminal section; belongs to the NhaA Na(+)/H(+) (TC 2.A.33) antiporter family. In the C-terminal section; belongs to the peptidase S49 family.

It is found in the cell inner membrane. It catalyses the reaction Na(+)(in) + 2 H(+)(out) = Na(+)(out) + 2 H(+)(in). In terms of biological role, na(+)/H(+) antiporter that extrudes sodium in exchange for external protons. In Brucella melitensis biotype 1 (strain ATCC 23456 / CCUG 17765 / NCTC 10094 / 16M), this protein is Na(+)/H(+) antiporter NhaA.